The chain runs to 56 residues: Large ribosomal subunit protein bL32 (56 aa).

Residues Met1 to His37 form a disordered region. Basic residues predominate over residues Lys7–Arg16. Positions Ala21 to Ala31 are enriched in polar residues.

Belongs to the bacterial ribosomal protein bL32 family.

The protein is Large ribosomal subunit protein bL32 of Shewanella pealeana (strain ATCC 700345 / ANG-SQ1).